The chain runs to 73 residues: Translation initiation factor IF-1 (73 aa).

Residues 1-73 enclose the S1-like domain; that stretch reads MAKKEDTIVL…TKARVVYRHR (73 aa).

Belongs to the IF-1 family. As to quaternary structure, component of the 30S ribosomal translation pre-initiation complex which assembles on the 30S ribosome in the order IF-2 and IF-3, IF-1 and N-formylmethionyl-tRNA(fMet); mRNA recruitment can occur at any time during PIC assembly.

It localises to the cytoplasm. One of the essential components for the initiation of protein synthesis. Stabilizes the binding of IF-2 and IF-3 on the 30S subunit to which N-formylmethionyl-tRNA(fMet) subsequently binds. Helps modulate mRNA selection, yielding the 30S pre-initiation complex (PIC). Upon addition of the 50S ribosomal subunit IF-1, IF-2 and IF-3 are released leaving the mature 70S translation initiation complex. In Chlamydia abortus (strain DSM 27085 / S26/3) (Chlamydophila abortus), this protein is Translation initiation factor IF-1.